Here is a 522-residue protein sequence, read N- to C-terminus: N-acetylgalactosamine-6-sulfatase (522 aa).

The signal sequence occupies residues 1–26 (MAAVVAATRWWQLLLVLSAAGMGASG). A catalytic domain region spans residues 27–379 (APQPPNILLL…PTLLQGRLMD (353 aa)). Residues aspartate 39, aspartate 40, and cysteine 79 each contribute to the Ca(2+) site. The active-site Nucleophile is cysteine 79. Position 79 is a 3-oxoalanine (Cys) (cysteine 79). Histidine 142 is a catalytic residue. An N-linked (GlcNAc...) asparagine glycan is attached at asparagine 204. Ca(2+) is bound by residues aspartate 288 and asparagine 289. Residues cysteine 308 and cysteine 419 are joined by a disulfide bond. Residue asparagine 423 is glycosylated (N-linked (GlcNAc...) asparagine). Disulfide bonds link cysteine 489-cysteine 518 and cysteine 501-cysteine 507.

The protein belongs to the sulfatase family. In terms of assembly, homodimer. Requires Ca(2+) as cofactor. In terms of processing, the conversion to 3-oxoalanine (also known as C-formylglycine, FGly), of a serine or cysteine residue in prokaryotes and of a cysteine residue in eukaryotes, is critical for catalytic activity.

It is found in the lysosome. The enzyme catalyses Hydrolysis of the 6-sulfate groups of the N-acetyl-D-galactosamine 6-sulfate units of chondroitin sulfate and of the D-galactose 6-sulfate units of keratan sulfate.. In Homo sapiens (Human), this protein is N-acetylgalactosamine-6-sulfatase (GALNS).